A 216-amino-acid polypeptide reads, in one-letter code: Probable transaldolase (216 aa).

Lys-83 serves as the catalytic Schiff-base intermediate with substrate.

It belongs to the transaldolase family. Type 3B subfamily.

The protein localises to the cytoplasm. The catalysed reaction is D-sedoheptulose 7-phosphate + D-glyceraldehyde 3-phosphate = D-erythrose 4-phosphate + beta-D-fructose 6-phosphate. It participates in carbohydrate degradation; pentose phosphate pathway; D-glyceraldehyde 3-phosphate and beta-D-fructose 6-phosphate from D-ribose 5-phosphate and D-xylulose 5-phosphate (non-oxidative stage): step 2/3. Transaldolase is important for the balance of metabolites in the pentose-phosphate pathway. This chain is Probable transaldolase, found in Desulforamulus reducens (strain ATCC BAA-1160 / DSM 100696 / MI-1) (Desulfotomaculum reducens).